A 374-amino-acid chain; its full sequence is Dispase autolysis-inducing protein (374 aa).

A signal peptide spans 1-26 (MKRMGWAVTAAVTTIVLAQSSLAAQA).

The protein resides in the secreted. In terms of biological role, induces autolysis of dispase and thermolysin. The sequence is that of Dispase autolysis-inducing protein (daip) from Streptomyces mobaraensis (Streptoverticillium mobaraense).